The chain runs to 365 residues: 3-dehydroquinate synthase (365 aa).

NAD(+) is bound by residues 69-74 (DGEAHK), 103-107 (GVIGD), 127-128 (TT), lysine 140, lysine 149, and 167-170 (TLNT). Residues glutamate 182, histidine 245, and histidine 262 each coordinate Zn(2+).

This sequence belongs to the sugar phosphate cyclases superfamily. Dehydroquinate synthase family. Co(2+) is required as a cofactor. Zn(2+) serves as cofactor. Requires NAD(+) as cofactor.

Its subcellular location is the cytoplasm. The enzyme catalyses 7-phospho-2-dehydro-3-deoxy-D-arabino-heptonate = 3-dehydroquinate + phosphate. Its pathway is metabolic intermediate biosynthesis; chorismate biosynthesis; chorismate from D-erythrose 4-phosphate and phosphoenolpyruvate: step 2/7. Catalyzes the conversion of 3-deoxy-D-arabino-heptulosonate 7-phosphate (DAHP) to dehydroquinate (DHQ). The protein is 3-dehydroquinate synthase of Pseudomonas putida (strain W619).